The chain runs to 1832 residues: Multifunctional protein pyr-3 (1832 aa).

The tract at residues 2–400 (AATVYRPATA…PGPRDTEFLF (399 aa)) is GATase (Glutamine amidotransferase). Positions 64, 273, and 275 each coordinate L-glutamine. The Glutamine amidotransferase type-1 domain occupies 228–413 (RILCLDVGMK…IQTVAKCTTD (186 aa)). C302 (nucleophile; for GATase activity) is an active-site residue. The L-glutamine site is built by L303, Q306, N344, G346, and Y347. Active-site for GATase activity residues include H386 and E388. Positions 401 to 442 (DVFIQTVAKCTTDNTLLQKGVEFPGGTTEENERLHPRVDVKK) are linker. Residues 443 to 983 (VLVLGSGGLS…SEHDVSFEDR (541 aa)) are CPSase A. The tract at residues 443-1484 (VLVLGSGGLS…TNVKNAKILV (1042 aa)) is CPSase (Carbamoyl phosphate synthase). ATP contacts are provided by R560, R600, G606, G607, R637, M639, E644, G670, I671, H672, Q713, and E727. ATP-grasp domains are found at residues 564-756 (ARSM…KLGL) and 1102-1293 (SRML…KAIM). 3 residues coordinate Mg(2+): Q713, E727, and N729. Mn(2+) is bound by residues Q713, E727, and N729. A CPSase B region spans residues 984–1484 (GVMVLGSGVY…TNVKNAKILV (501 aa)). ATP-binding residues include R1138, K1177, I1179, E1184, G1209, V1210, H1211, S1212, Q1252, and E1264. Residues Q1252, E1264, and N1266 each contribute to the Mg(2+) site. Mn(2+) is bound by residues Q1252, E1264, and N1266. In terms of domain architecture, MGS-like spans 1359–1507 (FKVPKKNILL…RDYQTSHTPL (149 aa)). The segment at 1485–1528 (EAIARYRDMEIGERDYQTSHTPLQLSGQVNFTLQDSLSRPHSFK) is linker. Residues 1529-1832 (KAHVLSVEQY…MALLALVMSG (304 aa)) are ATCase (Aspartate transcarbamylase). Carbamoyl phosphate contacts are provided by R1581 and T1582. K1609 provides a ligand contact to L-aspartate. Positions 1630, 1658, and 1661 each coordinate carbamoyl phosphate. Residues R1691 and R1754 each contribute to the L-aspartate site. 2 residues coordinate carbamoyl phosphate: L1793 and P1794.

It in the N-terminal section; belongs to the CarA family. The protein in the central section; belongs to the CarB family. This sequence in the C-terminal section; belongs to the aspartate/ornithine carbamoyltransferase superfamily. ATCase family. Mg(2+) is required as a cofactor. Mn(2+) serves as cofactor.

It is found in the cytoplasm. The protein resides in the nucleus. The catalysed reaction is hydrogencarbonate + L-glutamine + 2 ATP + H2O = carbamoyl phosphate + L-glutamate + 2 ADP + phosphate + 2 H(+). It catalyses the reaction L-glutamine + H2O = L-glutamate + NH4(+). The enzyme catalyses hydrogencarbonate + NH4(+) + 2 ATP = carbamoyl phosphate + 2 ADP + phosphate + 2 H(+). It carries out the reaction carbamoyl phosphate + L-aspartate = N-carbamoyl-L-aspartate + phosphate + H(+). It participates in pyrimidine metabolism; UMP biosynthesis via de novo pathway; (S)-dihydroorotate from bicarbonate: step 1/3. The protein operates within pyrimidine metabolism; UMP biosynthesis via de novo pathway; (S)-dihydroorotate from bicarbonate: step 2/3. Both CPSase and ATCase activities are feedback inhibited by the end product UTP. In terms of biological role, multifunctional protein that encodes the first 2 enzymatic activities of the de novo pyrimidine pathway: carbamoylphosphate synthetase (CPSase; EC 6.3.5.5) and aspartate transcarbamylase (ATCase; EC 2.1.3.2). The CPSase-function is accomplished in 2 steps, by a glutamine-dependent amidotransferase activity (GATase) that binds and cleaves glutamine to produce ammonia, followed by an ammonium-dependent carbamoyl phosphate synthetase, which reacts with the ammonia, hydrogencarbonate and ATP to form carbamoyl phosphate. The endogenously produced carbamoyl phosphate is sequestered and channeled to the ATCase active site. ATCase then catalyzes the formation of carbamoyl-L-aspartate from L-aspartate and carbamoyl phosphate. The protein is Multifunctional protein pyr-3 (pyr-3) of Neurospora crassa (strain ATCC 24698 / 74-OR23-1A / CBS 708.71 / DSM 1257 / FGSC 987).